A 61-amino-acid chain; its full sequence is Small ribosomal subunit protein uS14 (61 aa).

Zn(2+) is bound by residues cysteine 24, cysteine 27, cysteine 40, and cysteine 43.

Belongs to the universal ribosomal protein uS14 family. Zinc-binding uS14 subfamily. Part of the 30S ribosomal subunit. Contacts proteins S3 and S10. Zn(2+) is required as a cofactor.

Its function is as follows. Binds 16S rRNA, required for the assembly of 30S particles and may also be responsible for determining the conformation of the 16S rRNA at the A site. The polypeptide is Small ribosomal subunit protein uS14 (Endomicrobium trichonymphae).